Reading from the N-terminus, the 169-residue chain is 6,7-dimethyl-8-ribityllumazine synthase (169 aa).

Residues F24, 58-60 (ALE), and 82-84 (AVV) contribute to the 5-amino-6-(D-ribitylamino)uracil site. 87 to 88 (ET) contributes to the (2S)-2-hydroxy-3-oxobutyl phosphate binding site. H90 acts as the Proton donor in catalysis. N115 contacts 5-amino-6-(D-ribitylamino)uracil. R129 provides a ligand contact to (2S)-2-hydroxy-3-oxobutyl phosphate.

The protein belongs to the DMRL synthase family.

It carries out the reaction (2S)-2-hydroxy-3-oxobutyl phosphate + 5-amino-6-(D-ribitylamino)uracil = 6,7-dimethyl-8-(1-D-ribityl)lumazine + phosphate + 2 H2O + H(+). It participates in cofactor biosynthesis; riboflavin biosynthesis; riboflavin from 2-hydroxy-3-oxobutyl phosphate and 5-amino-6-(D-ribitylamino)uracil: step 1/2. Catalyzes the formation of 6,7-dimethyl-8-ribityllumazine by condensation of 5-amino-6-(D-ribitylamino)uracil with 3,4-dihydroxy-2-butanone 4-phosphate. This is the penultimate step in the biosynthesis of riboflavin. The protein is 6,7-dimethyl-8-ribityllumazine synthase of Cupriavidus metallidurans (strain ATCC 43123 / DSM 2839 / NBRC 102507 / CH34) (Ralstonia metallidurans).